Reading from the N-terminus, the 423-residue chain is ATP-dependent Clp protease ATP-binding subunit ClpX (423 aa).

The 50-residue stretch at 1–50 (MTDDTEYRCSFCGKEHHQVDDLIAGPDVRICSECVVLSCEIVEDRRNEAL) folds into the ClpX-type ZB domain. Residues Cys-9, Cys-12, Cys-31, and Cys-34 each contribute to the Zn(2+) site. 126 to 133 (PTGCGKTY) contributes to the ATP binding site.

The protein belongs to the ClpX chaperone family. As to quaternary structure, component of the ClpX-ClpP complex. Forms a hexameric ring that, in the presence of ATP, binds to fourteen ClpP subunits assembled into a disk-like structure with a central cavity, resembling the structure of eukaryotic proteasomes.

In terms of biological role, ATP-dependent specificity component of the Clp protease. It directs the protease to specific substrates. Can perform chaperone functions in the absence of ClpP. The protein is ATP-dependent Clp protease ATP-binding subunit ClpX of Tropheryma whipplei (strain TW08/27) (Whipple's bacillus).